A 226-amino-acid chain; its full sequence is Phosphoglycolate phosphatase (226 aa).

Asp10 functions as the Nucleophile in the catalytic mechanism. Asp10, Asp12, and Asp175 together coordinate Mg(2+).

The protein belongs to the HAD-like hydrolase superfamily. CbbY/CbbZ/Gph/YieH family. Mg(2+) serves as cofactor.

The catalysed reaction is 2-phosphoglycolate + H2O = glycolate + phosphate. The protein operates within organic acid metabolism; glycolate biosynthesis; glycolate from 2-phosphoglycolate: step 1/1. Specifically catalyzes the dephosphorylation of 2-phosphoglycolate. Is involved in the dissimilation of the intracellular 2-phosphoglycolate formed during the DNA repair of 3'-phosphoglycolate ends, a major class of DNA lesions induced by oxidative stress. The sequence is that of Phosphoglycolate phosphatase from Vibrio cholerae serotype O1 (strain ATCC 39315 / El Tor Inaba N16961).